The following is a 242-amino-acid chain: Anamorsin homolog (242 aa).

Residues methionine 1 to leucine 140 form an N-terminal SAM-like domain region. Positions serine 141–asparagine 162 are linker. Positions 205, 208, 216, and 219 each coordinate [4Fe-4S] cluster. Short sequence motifs (cx2C motif) lie at residues cysteine 205–cysteine 208 and cysteine 216–cysteine 219. Residues cysteine 205 to cysteine 219 are fe-S binding site B.

It belongs to the anamorsin family. As to quaternary structure, monomer. [4Fe-4S] cluster is required as a cofactor.

The protein resides in the cytoplasm. Its subcellular location is the mitochondrion intermembrane space. Its function is as follows. Component of the cytosolic iron-sulfur (Fe-S) protein assembly (CIA) machinery. Required for the maturation of extramitochondrial Fe-S proteins. Part of an electron transfer chain functioning in an early step of cytosolic Fe-S biogenesis, facilitating the de novo assembly of a [4Fe-4S] cluster on the cytosolic Fe-S scaffold complex. Electrons are transferred from NADPH via a FAD- and FMN-containing diflavin oxidoreductase. Together with the diflavin oxidoreductase, also required for the assembly of the diferric tyrosyl radical cofactor of ribonucleotide reductase (RNR), probably by providing electrons for reduction during radical cofactor maturation in the catalytic small subunit. This is Anamorsin homolog from Plasmodium knowlesi (strain H).